Here is a 325-residue protein sequence, read N- to C-terminus: Reaction center protein M chain (325 aa).

A run of 3 helical transmembrane segments spans residues 53–79, 111–140, and 143–168; these read LGFTGTLSIIFGFMAIFIIGFNMLASV, EGGWWLMAGFFLTMSILLWWVRTYKRAEAL, and SQHLSWAFAAAIFFYLSLGFIRPVMM. Residues H182 and H202 each coordinate (7R,8Z)-bacteriochlorophyll b. The chain crosses the membrane as a helical span at residues 198-226; the sequence is YNPFHMLSIAFLYGSALLFAMHGATILAV. Fe cation contacts are provided by H219 and E234. W252 is an a ubiquinone binding site. H266 contributes to the Fe cation binding site.

Belongs to the reaction center PufL/M/PsbA/D family. Reaction center is composed of four bacteriochlorophylls, two bacteriopheophytins, two ubiquinones, one iron, and two highly hydrophobic polypeptide chains (designated L and M).

It localises to the cellular chromatophore membrane. In terms of biological role, the reaction center is a membrane-bound complex that mediates the initial photochemical event in the electron transfer process of photosynthesis. The chain is Reaction center protein M chain (pufM) from Allochromatium vinosum (strain ATCC 17899 / DSM 180 / NBRC 103801 / NCIMB 10441 / D) (Chromatium vinosum).